The chain runs to 434 residues: Putative nuclease OPG089 (434 aa).

Mg(2+)-binding residues include Asp-33, Asp-74, Glu-168, Asp-170, Asp-196, and Asp-198.

Belongs to the XPG/RAD2 endonuclease family. FEN1 subfamily. Requires Mg(2+) as cofactor.

The protein localises to the virion. Functionally, putative nuclease that seems to be required for double-strand break repair, homologous recombination, and production of full-length viral genomic DNA. The chain is Putative nuclease OPG089 (OPG089) from Homo sapiens (Human).